The chain runs to 525 residues: Ribosomal protein S6 kinase beta-1 (525 aa).

The TOS motif signature appears at phenylalanine 28–leucine 32. A disordered region spans residues phenylalanine 28 to methionine 54. Over residues isoleucine 30–glutamate 46 the composition is skewed to acidic residues. A Protein kinase domain is found at phenylalanine 91 to phenylalanine 352. Residues leucine 97–valine 105 and lysine 123 each bind ATP. Aspartate 218 acts as the Proton acceptor in catalysis. Threonine 252 bears the Phosphothreonine; by PDPK1 mark. Residues arginine 353–lysine 423 form the AGC-kinase C-terminal domain. The interval serine 380–threonine 399 is disordered. Residues glutamine 381 to threonine 399 show a composition bias toward polar residues. Serine 394 is modified (phosphoserine). Position 412 is a phosphothreonine; by MTOR, NEK6 and NEK7 (threonine 412). An autoinhibitory domain region spans residues glutamate 424 to leucine 525. Residues serine 434 and serine 441 each carry the phosphoserine modification. Threonine 444 carries the post-translational modification Phosphothreonine. 2 positions are modified to phosphoserine: serine 447 and serine 452. Residues valine 486–glutamine 509 are disordered. An N6-acetyllysine modification is found at lysine 516.

The protein belongs to the protein kinase superfamily. AGC Ser/Thr protein kinase family. S6 kinase subfamily. As to quaternary structure, interacts with PPP1R9A/neurabin-1. Interacts with RPTOR. Interacts with IRS1. Interacts with EIF3B and EIF3C. Interacts with POLDIP3. Interacts with TRAF4. Interacts (via N-terminus) with IER5. Dephosphorylation by PPP1CC at Thr-412 in mitochondrion. Phosphorylation at Thr-412 is regulated by mTORC1. The phosphorylation at this site is maintained by an agonist-dependent autophosphorylation mechanism. Activated by phosphorylation at Thr-252 by PDPK1. As to expression, brain.

The protein resides in the cytoplasm. Its subcellular location is the synapse. The protein localises to the synaptosome. It is found in the mitochondrion outer membrane. It localises to the mitochondrion. It catalyses the reaction L-seryl-[protein] + ATP = O-phospho-L-seryl-[protein] + ADP + H(+). It carries out the reaction L-threonyl-[protein] + ATP = O-phospho-L-threonyl-[protein] + ADP + H(+). Activation requires multiple phosphorylation events on serine/threonine residues. Activation appears to be first mediated by phosphorylation of multiple sites in the autoinhibitory domain, which facilitates phosphorylation at Thr-412, disrupting the autoinhibitory mechanism and allowing phosphorylation of Thr-252 by PDPK1. The active conformation of the kinase is believed to be stabilized by a mechanism involving three conserved phosphorylation sites located in the kinase domain activation loop (Thr-252) and in the AGC-kinase C-terminal domain (Ser-394 in the middle of the tail/linker region and Thr-412 within a hydrophobic motif at its end). Activated by mTORC1; isoform Alpha I and isoform Alpha II are sensitive to rapamycin, which inhibits activating phosphorylation at Thr-412. Activated by PDPK1. Serine/threonine-protein kinase that acts downstream of mTOR signaling in response to growth factors and nutrients to promote cell proliferation, cell growth and cell cycle progression. Regulates protein synthesis through phosphorylation of EIF4B, RPS6 and EEF2K, and contributes to cell survival by repressing the pro-apoptotic function of BAD. Under conditions of nutrient depletion, the inactive form associates with the EIF3 translation initiation complex. Upon mitogenic stimulation, phosphorylation by the mechanistic target of rapamycin complex 1 (mTORC1) leads to dissociation from the EIF3 complex and activation. The active form then phosphorylates and activates several substrates in the pre-initiation complex, including the EIF2B complex and the cap-binding complex component EIF4B. Also controls translation initiation by phosphorylating a negative regulator of EIF4A, PDCD4, targeting it for ubiquitination and subsequent proteolysis. Promotes initiation of the pioneer round of protein synthesis by phosphorylating POLDIP3/SKAR. In response to IGF1, activates translation elongation by phosphorylating EEF2 kinase (EEF2K), which leads to its inhibition and thus activation of EEF2. Also plays a role in feedback regulation of mTORC2 by mTORC1 by phosphorylating MAPKAP1/SIN1, MTOR and RICTOR, resulting in the inhibition of mTORC2 and AKT1 signaling. Also involved in feedback regulation of mTORC1 and mTORC2 by phosphorylating DEPTOR. Mediates cell survival by phosphorylating the pro-apoptotic protein BAD and suppressing its pro-apoptotic function. Phosphorylates mitochondrial URI1 leading to dissociation of a URI1-PPP1CC complex. The free mitochondrial PPP1CC can then dephosphorylate RPS6KB1 at Thr-412, which is proposed to be a negative feedback mechanism for the RPS6KB1 anti-apoptotic function. Mediates TNF-alpha-induced insulin resistance by phosphorylating IRS1 at multiple serine residues, resulting in accelerated degradation of IRS1. In cells lacking functional TSC1-2 complex, constitutively phosphorylates and inhibits GSK3B. May be involved in cytoskeletal rearrangement through binding to neurabin. Phosphorylates and activates the pyrimidine biosynthesis enzyme CAD, downstream of MTOR. Following activation by mTORC1, phosphorylates EPRS and thereby plays a key role in fatty acid uptake by adipocytes and also most probably in interferon-gamma-induced translation inhibition. The chain is Ribosomal protein S6 kinase beta-1 (Rps6kb1) from Rattus norvegicus (Rat).